Here is a 226-residue protein sequence, read N- to C-terminus: Eukaryotic translation initiation factor 3 subunit K (226 aa).

The PCI domain occupies 42 to 200 (YNLDANLSLL…QLIVLPRNEF (159 aa)).

Belongs to the eIF-3 subunit K family. Component of the eukaryotic translation initiation factor 3 (eIF-3) complex.

The protein localises to the cytoplasm. Functionally, component of the eukaryotic translation initiation factor 3 (eIF-3) complex, which is involved in protein synthesis of a specialized repertoire of mRNAs and, together with other initiation factors, stimulates binding of mRNA and methionyl-tRNAi to the 40S ribosome. The eIF-3 complex specifically targets and initiates translation of a subset of mRNAs involved in cell proliferation. This Oryza sativa subsp. japonica (Rice) protein is Eukaryotic translation initiation factor 3 subunit K (TIF3K1).